A 61-amino-acid chain; its full sequence is Small ribosomal subunit protein uS14 (61 aa).

4 residues coordinate Zn(2+): Cys24, Cys27, Cys40, and Cys43.

The protein belongs to the universal ribosomal protein uS14 family. Zinc-binding uS14 subfamily. As to quaternary structure, part of the 30S ribosomal subunit. Contacts proteins S3 and S10. It depends on Zn(2+) as a cofactor.

Its function is as follows. Binds 16S rRNA, required for the assembly of 30S particles and may also be responsible for determining the conformation of the 16S rRNA at the A site. The sequence is that of Small ribosomal subunit protein uS14 from Syntrophotalea carbinolica (strain DSM 2380 / NBRC 103641 / GraBd1) (Pelobacter carbinolicus).